A 46-amino-acid chain; its full sequence is Esculentin-1HSa (46 aa).

The cysteines at positions 40 and 46 are disulfide-linked.

In terms of tissue distribution, expressed by the skin glands.

It localises to the secreted. In terms of biological role, has antibacterial activity against the Gram-positive bacterium S.aureus ATCC 25923 (MIC=12 uM) and the Gram-negative bacterium E.coli ATCC 25726 (MIC=12 uM). This is Esculentin-1HSa from Odorrana hosii (Hose's rock frog).